The chain runs to 1041 residues: Pre-mRNA-splicing factor ATP-dependent RNA helicase DHX16 (1041 aa).

Disordered stretches follow at residues 101 to 207 (EDSE…AYEE) and 371 to 391 (LQGD…QKES). A phosphoserine mark is found at S103, S106, and S107. Basic residues predominate over residues 119–130 (QKKRKKRKHLRK). Residue S160 is modified to Phosphoserine. A compositionally biased stretch (basic and acidic residues) spans 166 to 207 (RTERERLQDLEERDAFAERVRQRDKDRTRNVLERSDKKAYEE). Over residues 381–391 (PTSTQAQQKES) the composition is skewed to polar residues. In terms of domain architecture, Helicase ATP-binding spans 409–573 (LAAIANHQVL…FDDAPVFRIP (165 aa)). 422–429 (GETGSGKT) is an ATP binding site. The DEAH box motif lies at 520-523 (DEAH). One can recognise a Helicase C-terminal domain in the interval 598–771 (SVLQIHVTQP…NVVLLLKSLG (174 aa)). Position 712 is a phosphothreonine (T712).

Belongs to the DEAD box helicase family. DEAH subfamily. DDX16/PRP8 sub-subfamily. Component of pre-catalytic spliceosome complexes. Component of the minor spliceosome, which splices U12-type introns. Interacts with GPKOW. Interacts with TRIM6. Interacts with RIGI. Expressed in the spleen, thyroid and testis. Also expressed in the brain and cerebellum.

It localises to the nucleus. It is found in the nucleoplasm. Its subcellular location is the cytoplasm. The catalysed reaction is ATP + H2O = ADP + phosphate + H(+). Required for pre-mRNA splicing as a component of the spliceosome. Contributes to pre-mRNA splicing after spliceosome formation and prior to the first transesterification reaction. As a component of the minor spliceosome, involved in the splicing of U12-type introns in pre-mRNAs. Also plays a role in innate antiviral response by acting as a pattern recognition receptor sensing splicing signals in viral RNA. Mechanistically, TRIM6 promotes the interaction between unanchored 'Lys-48'-polyubiquitin chains and DHX16, leading to DHX16 interaction with RIGI and ssRNA to amplify RIGI-dependent innate antiviral immune responses. This Homo sapiens (Human) protein is Pre-mRNA-splicing factor ATP-dependent RNA helicase DHX16 (DHX16).